The following is a 605-amino-acid chain: Arginyl-tRNA--protein transferase 2 (605 aa).

The segment covering 496-513 (KVSSSSSSPQASETLLES) has biased composition (low complexity). Positions 496–549 (KVSSSSSSPQASETLLESTSEHEDMEQGDTNDDDDEMYNSDEDSDSDSSSSRNR) are disordered. Positions 518–541 (EDMEQGDTNDDDDEMYNSDEDSDS) are enriched in acidic residues.

This sequence belongs to the R-transferase family.

It carries out the reaction an N-terminal L-alpha-aminoacyl-[protein] + L-arginyl-tRNA(Arg) = an N-terminal L-arginyl-L-aminoacyl-[protein] + tRNA(Arg) + H(+). Functionally, involved in the post-translational conjugation of arginine to the N-terminal aspartate or glutamate of a protein. This arginylation is required for degradation of the protein via the ubiquitin pathway. Component of the N-end rule pathway with ATE1 and PRT6. The N-end rule pathway regulates seed after-ripening, seedling sugar sensitivity, seedling lipid breakdown, and abscisic acid (ABA) sensitivity of germination. The end-rule pathway regulates various aspects of leaf and shoot development. Involved in the oxygen-dependent N-arginylation of RAP2-12, an activator of hypoxic gene expression. This N-terminal modification leads to ubiquitination by PRT6 and subsequent degradation of RAP2-12 under aerobic conditions. Involved in disease resistance. The end-rule pathway plays a role in regulating the timing and amplitude of the immune response following infection with the bacterial pathogen Pseudomonas syringae pv tomato. Regulates the biosynthesis of plant-defense metabolites such as glucosinolates, and the biosynthesis and response to the phytohormone jasmonate (JA), which plays a key role in plant immunity. In Arabidopsis thaliana (Mouse-ear cress), this protein is Arginyl-tRNA--protein transferase 2.